Here is a 383-residue protein sequence, read N- to C-terminus: Succinyl-diaminopimelate desuccinylase (383 aa).

Zn(2+) is bound at residue His-69. Asp-71 is an active-site residue. Position 103 (Asp-103) interacts with Zn(2+). Catalysis depends on Glu-137, which acts as the Proton acceptor. Zn(2+) is bound by residues Glu-138, Glu-166, and His-357.

This sequence belongs to the peptidase M20A family. DapE subfamily. In terms of assembly, homodimer. The cofactor is Zn(2+). It depends on Co(2+) as a cofactor.

The enzyme catalyses N-succinyl-(2S,6S)-2,6-diaminopimelate + H2O = (2S,6S)-2,6-diaminopimelate + succinate. Its pathway is amino-acid biosynthesis; L-lysine biosynthesis via DAP pathway; LL-2,6-diaminopimelate from (S)-tetrahydrodipicolinate (succinylase route): step 3/3. Functionally, catalyzes the hydrolysis of N-succinyl-L,L-diaminopimelic acid (SDAP), forming succinate and LL-2,6-diaminopimelate (DAP), an intermediate involved in the bacterial biosynthesis of lysine and meso-diaminopimelic acid, an essential component of bacterial cell walls. In Rickettsia typhi (strain ATCC VR-144 / Wilmington), this protein is Succinyl-diaminopimelate desuccinylase.